Here is a 168-residue protein sequence, read N- to C-terminus: Phosphopantetheine adenylyltransferase (168 aa).

Residue Thr10 participates in substrate binding. Residues 10 to 11 and His18 contribute to the ATP site; that span reads TF. Substrate contacts are provided by Lys42, Leu74, and Arg88. ATP is bound by residues 89-91, Glu99, and 124-130; these read GLR and NSFISST.

This sequence belongs to the bacterial CoaD family. In terms of assembly, homohexamer. The cofactor is Mg(2+).

It localises to the cytoplasm. It carries out the reaction (R)-4'-phosphopantetheine + ATP + H(+) = 3'-dephospho-CoA + diphosphate. The protein operates within cofactor biosynthesis; coenzyme A biosynthesis; CoA from (R)-pantothenate: step 4/5. In terms of biological role, reversibly transfers an adenylyl group from ATP to 4'-phosphopantetheine, yielding dephospho-CoA (dPCoA) and pyrophosphate. This Shewanella frigidimarina (strain NCIMB 400) protein is Phosphopantetheine adenylyltransferase.